Consider the following 383-residue polypeptide: 8-amino-7-oxononanoate synthase (383 aa).

Substrate is bound by residues Arg-27 and Arg-34. Gly-114–Tyr-115 lines the pyridoxal 5'-phosphate pocket. His-139 is a binding site for substrate. Residues Ser-187, Asp-212–His-215, and Thr-232–Lys-235 contribute to the pyridoxal 5'-phosphate site. The residue at position 235 (Lys-235) is an N6-(pyridoxal phosphate)lysine. Thr-344 is a substrate binding site.

It belongs to the class-II pyridoxal-phosphate-dependent aminotransferase family. BioF subfamily. Homodimer. Requires pyridoxal 5'-phosphate as cofactor.

The catalysed reaction is 6-carboxyhexanoyl-[ACP] + L-alanine + H(+) = (8S)-8-amino-7-oxononanoate + holo-[ACP] + CO2. It participates in cofactor biosynthesis; biotin biosynthesis. Its function is as follows. Catalyzes the decarboxylative condensation of pimeloyl-[acyl-carrier protein] and L-alanine to produce 8-amino-7-oxononanoate (AON), [acyl-carrier protein], and carbon dioxide. This chain is 8-amino-7-oxononanoate synthase, found in Methylorubrum extorquens (strain PA1) (Methylobacterium extorquens).